The chain runs to 304 residues: Calmodulin-lysine N-methyltransferase (304 aa).

The protein belongs to the class I-like SAM-binding methyltransferase superfamily. CLNMT methyltransferase family. In terms of assembly, monomer. In terms of tissue distribution, expressed in discreet spatial and tissue-specific patterns including root tips, leaves-tips, floral buds, stamens, hydathodes, stigma, anther, siliques, apical meristems and germinating seeds. Also observed at high levels in the root stele region.

It localises to the cytoplasm. The protein localises to the nucleus. The enzyme catalyses [calmodulin]-L-lysine + S-adenosyl-L-methionine = [calmodulin]-N(6)-methyl-L-lysine + S-adenosyl-L-homocysteine + H(+). In terms of biological role, catalyzes the trimethylation of calmodulin. Regulates roots development probably by modulating auxin signaling responses. May be involved in gravitropism. Involved in abscisic acid (ABA)-mediated and abiotic stress responses, including salt (NaCl), cold, drought and heat stresses. This is Calmodulin-lysine N-methyltransferase from Arabidopsis thaliana (Mouse-ear cress).